The sequence spans 50 residues: Small nuclear ribonucleoprotein Sm D2 (50 aa).

Positions 1–36 (MSLLNKPKSEMTPEELQKREEEEFNTGPLSVXTQSX) are disordered. Ser-2 carries the post-translational modification N-acetylserine. Glycyl lysine isopeptide (Lys-Gly) (interchain with G-Cter in SUMO2) cross-links involve residues Lys-6 and Lys-8. Basic and acidic residues predominate over residues 7–21 (PKSEMTPEELQKREE). Ser-9 is subject to Phosphoserine. Residue Thr-12 is modified to Phosphothreonine.

It belongs to the snRNP core protein family. As to quaternary structure, core component of the spliceosomal U1, U2, U4 and U5 small nuclear ribonucleoproteins (snRNPs), the building blocks of the spliceosome. Most spliceosomal snRNPs contain a common set of Sm proteins, SNRPB, SNRPD1, SNRPD2, SNRPD3, SNRPE, SNRPF and SNRPG that assemble in a heptameric protein ring on the Sm site of the small nuclear RNA to form the core snRNP. Component of the U1 snRNP. The U1 snRNP is composed of the U1 snRNA and the 7 core Sm proteins SNRPB, SNRPD1, SNRPD2, SNRPD3, SNRPE, SNRPF and SNRPG, and at least three U1 snRNP-specific proteins SNRNP70/U1-70K, SNRPA/U1-A and SNRPC/U1-C. Component of the U4/U6-U5 tri-snRNP complex composed of the U4, U6 and U5 snRNAs and at least PRPF3, PRPF4, PRPF6, PRPF8, PRPF31, SNRNP200, TXNL4A, SNRNP40, SNRPB, SNRPD1, SNRPD2, SNRPD3, SNRPE, SNRPF, SNRPG, DDX23, CD2BP2, PPIH, SNU13, EFTUD2, SART1 and USP39, plus LSM2, LSM3, LSM4, LSM5, LSM6, LSM7 and LSM8. Component of the minor spliceosome, which splices U12-type introns. Part of the SMN-Sm complex that contains SMN1, GEMIN2/SIP1, DDX20/GEMIN3, GEMIN4, GEMIN5, GEMIN6, GEMIN7, GEMIN8, STRAP/UNRIP and the Sm proteins SNRPB, SNRPD1, SNRPD2, SNRPD3, SNRPE, SNRPF and SNRPG; catalyzes core snRNPs assembly. Forms a 6S pICln-Sm complex composed of CLNS1A/pICln, SNRPD1, SNRPD2, SNRPE, SNRPF and SNRPG; ring-like structure where CLNS1A/pICln mimics additional Sm proteins and which is unable to assemble into the core snRNP. Interacts with SMN1; the interaction is direct. Interacts with GEMIN2; the interaction is direct. Interacts with SNRPD1; the interaction is direct. Interacts with SNRPF; the interaction is direct.

The protein resides in the cytoplasm. It is found in the cytosol. It localises to the nucleus. Plays a role in pre-mRNA splicing as a core component of the spliceosomal U1, U2, U4 and U5 small nuclear ribonucleoproteins (snRNPs), the building blocks of the spliceosome. Component of both the pre-catalytic spliceosome B complex and activated spliceosome C complexes. As a component of the minor spliceosome, involved in the splicing of U12-type introns in pre-mRNAs. The protein is Small nuclear ribonucleoprotein Sm D2 (SNRPD2) of Sus scrofa (Pig).